The chain runs to 772 residues: Glucocorticoid receptor (772 aa).

Over residues Met-1–Val-15 the composition is skewed to basic and acidic residues. Positions Met-1–Pro-22 are disordered. The modulating stretch occupies residues Met-1–Leu-415. Arg-25 carries the omega-N-methylarginine modification. The interval Ala-39 to Arg-82 is disordered. Low complexity predominate over residues Pro-44 to Ser-58. 4 positions are modified to phosphoserine: Ser-47, Ser-115, Ser-136, and Ser-143. The segment at Asn-132–Pro-186 is disordered. Over residues Ser-143–Gly-156 the composition is skewed to low complexity. Positions Pro-158–Asn-170 are enriched in basic and acidic residues. Residues Ser-203, Ser-211, and Ser-226 each carry the phosphoserine modification. Lys-258 is covalently cross-linked (Glycyl lysine isopeptide (Lys-Gly) (interchain with G-Cter in SUMO2)). Glycyl lysine isopeptide (Lys-Gly) (interchain with G-Cter in SUMO); alternate cross-links involve residues Lys-277 and Lys-293. Glycyl lysine isopeptide (Lys-Gly) (interchain with G-Cter in SUMO2); alternate cross-links involve residues Lys-277 and Lys-293. 2 positions are modified to phosphoserine: Ser-307 and Ser-400. Lys-414 is covalently cross-linked (Glycyl lysine isopeptide (Lys-Gly) (interchain with G-Cter in ubiquitin)). NR C4-type zinc fingers lie at residues Cys-416–Cys-436 and Cys-452–Cys-476. The segment at residues Cys-416–Met-481 is a DNA-binding region (nuclear receptor). N6-acetyllysine is present on residues Lys-475, Lys-487, Lys-489, and Lys-490. The interaction with CLOCK stretch occupies residues Gly-480–Lys-772. The tract at residues Asn-482–Ala-518 is hinge. The disordered stretch occupies residues Gly-494–Arg-513. The segment covering Ser-499–Arg-513 has biased composition (polar residues). In terms of domain architecture, NR LBD spans Ala-519–Thr-753. An interaction with CRY1 region spans residues Leu-527–Leu-692. A Glycyl lysine isopeptide (Lys-Gly) (interchain with G-Cter in SUMO) cross-link involves residue Lys-698.

The protein belongs to the nuclear hormone receptor family. NR3 subfamily. Heteromultimeric cytoplasmic complex with HSP90AA1, HSPA1A/HSPA1B, and FKBP5 or another immunophilin such as PPID, STIP1, or the immunophilin homolog PPP5C. Upon ligand binding FKBP5 dissociates from the complex and FKBP4 takes its place, thereby linking the complex to dynein and mediating transport to the nucleus, where the complex dissociates. Probably forms a complex composed of chaperones HSP90 and HSP70, co-chaperones CDC37, PPP5C, TSC1 and client protein TSC2, CDK4, AKT, RAF1 and NR3C1; this complex does not contain co-chaperones STIP1/HOP and PTGES3/p23. Directly interacts with UNC45A. Binds to DNA as a homodimer, and as heterodimer with NR3C2 or the retinoid X receptor. Binds STAT5A and STAT5B homodimers and heterodimers. Interacts with NRIP1, POU2F1, POU2F2 and TRIM28. Interacts with several coactivator complexes, including the SMARCA4 complex, CREBBP/EP300, TADA2L (Ada complex) and p160 coactivators such as NCOA2 and NCOA6. Interaction with BAG1 inhibits transactivation. Interacts with HEXIM1 and TGFB1I1. Interacts with NCOA1. Interacts with NCOA3, SMARCA4, SMARCC1, SMARCD1, and SMARCE1. Interacts with CLOCK, CRY1 and CRY2 in a ligand-dependent fashion. Interacts with CIART. Interacts with RWDD3. Interacts with UBE2I/UBC9 and this interaction is enhanced in the presence of RWDD3. Interacts with GRIP1. Interacts with NR4A3 (via nuclear receptor DNA-binding domain), represses transcription activity of NR4A3 on the POMC promoter Nur response element (NurRE). Directly interacts with PNRC2 to attract and form a complex with UPF1 and DCP1A; the interaction leads to rapid mRNA degradation. Interacts with GSK3B. Interacts with FNIP1 and FNIP2. Interacts (via C-terminus) with HNRNPU (via C-terminus). Interacts with MCM3AP. Interacts (via domain NR LBD) with HSP90AA1 and HSP90AB1. In the absence of hormonal ligand, interacts with TACC1. Interacts (via NR LBD domain) with ZNF764 (via KRAB domain); the interaction regulates transcription factor activity of NR3C1 by directing its actions toward certain biologic pathways. Acetylation by CLOCK reduces its binding to glucocorticoid response elements and its transcriptional activity. Post-translationally, increased proteasome-mediated degradation in response to glucocorticoids. In terms of processing, phosphorylated in the absence of hormone; becomes hyperphosphorylated in the presence of glucocorticoid. The Ser-203, Ser-226 and Ser-399-phosphorylated forms are mainly cytoplasmic, and the Ser-211-phosphorylated form is nuclear. Phosphorylation at Ser-211 increases transcriptional activity. Phosphorylation at Ser-203, Ser-226 and Ser-399 decreases signaling capacity. Phosphorylation at Ser-399 may protect from glucocorticoid-induced apoptosis. Phosphorylation at Ser-203 and Ser-211 is not required in regulation of chromosome segregation. May be dephosphorylated by PPP5C, attenuates NR3C1 action. Ubiquitinated by UBR5, leading to its degradation: UBR5 specifically recognizes and binds ligand-bound NR3C1 when it is not associated with coactivators (NCOAs). In presence of NCOAs, the UBR5-degron is not accessible, preventing its ubiquitination and degradation. Post-translationally, sumoylation at Lys-277 and Lys-293 negatively regulates its transcriptional activity. Sumoylation at Lys-698 positively regulates its transcriptional activity in the presence of RWDD3. Sumoylation at Lys-277 and Lys-293 is dispensable whereas sumoylation at Lys-698 is critical for the stimulatory effect of RWDD3 on its transcriptional activity. Heat shock increases sumoylation in a RWDD3-dependent manner.

It is found in the cytoplasm. The protein localises to the nucleus. It localises to the mitochondrion. The protein resides in the cytoskeleton. Its subcellular location is the spindle. It is found in the microtubule organizing center. The protein localises to the centrosome. It localises to the chromosome. The protein resides in the nucleoplasm. Its function is as follows. Receptor for glucocorticoids (GC). Has a dual mode of action: as a transcription factor that binds to glucocorticoid response elements (GRE), both for nuclear and mitochondrial DNA, and as a modulator of other transcription factors. Affects inflammatory responses, cellular proliferation and differentiation in target tissues. Involved in chromatin remodeling. Plays a role in rapid mRNA degradation by binding to the 5' UTR of target mRNAs and interacting with PNRC2 in a ligand-dependent manner which recruits the RNA helicase UPF1 and the mRNA-decapping enzyme DCP1A, leading to RNA decay. Could act as a coactivator for STAT5-dependent transcription upon growth hormone (GH) stimulation and could reveal an essential role of hepatic GR in the control of body growth. Mediates glucocorticoid-induced apoptosis. Promotes accurate chromosome segregation during mitosis. May act as a tumor suppressor. May play a negative role in adipogenesis through the regulation of lipolytic and antilipogenic gene expression. This chain is Glucocorticoid receptor (NR3C1), found in Oryctolagus cuniculus (Rabbit).